Reading from the N-terminus, the 220-residue chain is Ribosomal RNA large subunit methyltransferase E (220 aa).

Residues Gly-60, Trp-62, Asp-92, Asp-108, and Asp-133 each coordinate S-adenosyl-L-methionine. Residue Lys-173 is the Proton acceptor of the active site.

The protein belongs to the class I-like SAM-binding methyltransferase superfamily. RNA methyltransferase RlmE family.

Its subcellular location is the cytoplasm. The enzyme catalyses uridine(2552) in 23S rRNA + S-adenosyl-L-methionine = 2'-O-methyluridine(2552) in 23S rRNA + S-adenosyl-L-homocysteine + H(+). Its function is as follows. Specifically methylates the uridine in position 2552 of 23S rRNA at the 2'-O position of the ribose in the fully assembled 50S ribosomal subunit. The protein is Ribosomal RNA large subunit methyltransferase E of Burkholderia thailandensis (strain ATCC 700388 / DSM 13276 / CCUG 48851 / CIP 106301 / E264).